Reading from the N-terminus, the 342-residue chain is Galactose mutarotase (342 aa).

Alanine 2 is subject to N-acetylalanine. Serine 14 is subject to Phosphoserine. Beta-D-galactose is bound by residues 81–82 (NR) and histidine 107. Position 124 is a phosphoserine (serine 124). Histidine 176 (proton donor) is an active-site residue. Beta-D-galactose contacts are provided by residues 176 to 178 (HSY), aspartate 243, glutamine 279, and glutamate 307. Residue glutamate 307 is the Proton acceptor of the active site.

The protein belongs to the aldose epimerase family. In terms of assembly, monomer.

It localises to the cytoplasm. It catalyses the reaction alpha-D-galactose = beta-D-galactose. The enzyme catalyses alpha-D-glucose = beta-D-glucose. It functions in the pathway carbohydrate metabolism; hexose metabolism. The protein operates within carbohydrate metabolism; galactose metabolism. Its function is as follows. Mutarotase that catalyzes the interconversion of beta-D-galactose and alpha-D-galactose during galactose metabolism. Beta-D-galactose is metabolized in the liver into glucose 1-phosphate, the primary metabolic fuel, by the action of four enzymes that constitute the Leloir pathway: GALM, GALK1 (galactokinase), GALT (galactose-1-phosphate uridylyltransferase) and GALE (UDP-galactose-4'-epimerase). Involved in the maintenance of the equilibrium between the beta- and alpha-anomers of galactose, therefore ensuring a sufficient supply of the alpha-anomer for GALK1. Also active on D-glucose although shows a preference for galactose over glucose. This Pongo abelii (Sumatran orangutan) protein is Galactose mutarotase (GALM).